The sequence spans 185 residues: Ribosome-recycling factor (185 aa).

The protein belongs to the RRF family.

The protein localises to the cytoplasm. Its function is as follows. Responsible for the release of ribosomes from messenger RNA at the termination of protein biosynthesis. May increase the efficiency of translation by recycling ribosomes from one round of translation to another. This Frankia casuarinae (strain DSM 45818 / CECT 9043 / HFP020203 / CcI3) protein is Ribosome-recycling factor.